The primary structure comprises 278 residues: Tryptophan synthase alpha chain (278 aa).

Active-site proton acceptor residues include Glu-50 and Asp-61.

Belongs to the TrpA family. In terms of assembly, tetramer of two alpha and two beta chains.

The enzyme catalyses (1S,2R)-1-C-(indol-3-yl)glycerol 3-phosphate + L-serine = D-glyceraldehyde 3-phosphate + L-tryptophan + H2O. The protein operates within amino-acid biosynthesis; L-tryptophan biosynthesis; L-tryptophan from chorismate: step 5/5. Its function is as follows. The alpha subunit is responsible for the aldol cleavage of indoleglycerol phosphate to indole and glyceraldehyde 3-phosphate. This is Tryptophan synthase alpha chain from Methylobacterium nodulans (strain LMG 21967 / CNCM I-2342 / ORS 2060).